Here is a 137-residue protein sequence, read N- to C-terminus: Small ribosomal subunit protein uS12 (137 aa).

Disordered regions lie at residues methionine 1–serine 21 and threonine 36–lysine 57. At aspartate 102 the chain carries 3-methylthioaspartic acid.

The protein belongs to the universal ribosomal protein uS12 family. As to quaternary structure, part of the 30S ribosomal subunit. Contacts proteins S8 and S17. May interact with IF1 in the 30S initiation complex.

With S4 and S5 plays an important role in translational accuracy. In terms of biological role, interacts with and stabilizes bases of the 16S rRNA that are involved in tRNA selection in the A site and with the mRNA backbone. Located at the interface of the 30S and 50S subunits, it traverses the body of the 30S subunit contacting proteins on the other side and probably holding the rRNA structure together. The combined cluster of proteins S8, S12 and S17 appears to hold together the shoulder and platform of the 30S subunit. This chain is Small ribosomal subunit protein uS12, found in Streptococcus agalactiae serotype Ia (strain ATCC 27591 / A909 / CDC SS700).